Here is a 312-residue protein sequence, read N- to C-terminus: NAD-dependent protein deacylase Sirt4 (312 aa).

The transit peptide at 1 to 16 directs the protein to the mitochondrion; that stretch reads MRVGQLLRFRSTSLRS. In terms of domain architecture, Deacetylase sirtuin-type spans 28–312; sequence KPVVEDDIKR…FDFRNSKSVS (285 aa). Residues 53–73 and 134–137 contribute to the NAD(+) site; these read GAGI…VGLY and QNVD. Residue H152 is the Proton acceptor of the active site. 4 residues coordinate Zn(2+): C160, C163, C211, and C214. NAD(+)-binding positions include 251–253, 277–279, and C295; these read GSS and NIG.

This sequence belongs to the sirtuin family. Class II subfamily. It depends on Zn(2+) as a cofactor.

It localises to the mitochondrion matrix. It catalyses the reaction N(6)-acetyl-L-lysyl-[protein] + NAD(+) + H2O = 2''-O-acetyl-ADP-D-ribose + nicotinamide + L-lysyl-[protein]. Its function is as follows. NAD-dependent protein deacylase. Catalyzes the NAD-dependent hydrolysis of acyl groups from lysine residues. The polypeptide is NAD-dependent protein deacylase Sirt4 (Sirt4) (Drosophila melanogaster (Fruit fly)).